Reading from the N-terminus, the 233-residue chain is 7-cyano-7-deazaguanine synthase (233 aa).

An ATP-binding site is contributed by 11–21 (FSGGQDSTTCL). The Zn(2+) site is built by Cys199, Cys214, Cys217, and Cys220.

The protein belongs to the QueC family. Zn(2+) serves as cofactor.

It catalyses the reaction 7-carboxy-7-deazaguanine + NH4(+) + ATP = 7-cyano-7-deazaguanine + ADP + phosphate + H2O + H(+). The protein operates within purine metabolism; 7-cyano-7-deazaguanine biosynthesis. Its function is as follows. Catalyzes the ATP-dependent conversion of 7-carboxy-7-deazaguanine (CDG) to 7-cyano-7-deazaguanine (preQ(0)). This chain is 7-cyano-7-deazaguanine synthase, found in Herminiimonas arsenicoxydans.